The primary structure comprises 326 residues: Undecaprenyl-phosphate 4-deoxy-4-formamido-L-arabinose transferase (326 aa).

2 helical membrane-spanning segments follow: residues 236-256 (LSVV…LLIV) and 270-290 (VFTL…AMGL).

Belongs to the glycosyltransferase 2 family.

It localises to the cell inner membrane. The enzyme catalyses UDP-4-deoxy-4-formamido-beta-L-arabinose + di-trans,octa-cis-undecaprenyl phosphate = 4-deoxy-4-formamido-alpha-L-arabinopyranosyl di-trans,octa-cis-undecaprenyl phosphate + UDP. It participates in glycolipid biosynthesis; 4-amino-4-deoxy-alpha-L-arabinose undecaprenyl phosphate biosynthesis; 4-amino-4-deoxy-alpha-L-arabinose undecaprenyl phosphate from UDP-4-deoxy-4-formamido-beta-L-arabinose and undecaprenyl phosphate: step 1/2. It functions in the pathway bacterial outer membrane biogenesis; lipopolysaccharide biosynthesis. In terms of biological role, catalyzes the transfer of 4-deoxy-4-formamido-L-arabinose from UDP to undecaprenyl phosphate. The modified arabinose is attached to lipid A and is required for resistance to polymyxin and cationic antimicrobial peptides. The sequence is that of Undecaprenyl-phosphate 4-deoxy-4-formamido-L-arabinose transferase from Proteus mirabilis (strain HI4320).